Here is a 188-residue protein sequence, read N- to C-terminus: Phosphatidylinositol N-acetylglucosaminyltransferase subunit H (188 aa).

The protein belongs to the PIGH family. In terms of assembly, component of the glycosylphosphatidylinositol-N-acetylglucosaminyltransferase (GPI-GnT) complex composed at least by PIGA, PIGC, PIGH, PIGP, PIGQ, PIGY and DPM2. Interacts with PIGQ.

Its subcellular location is the cytoplasm. It participates in glycolipid biosynthesis; glycosylphosphatidylinositol-anchor biosynthesis. Functionally, part of the glycosylphosphatidylinositol-N-acetylglucosaminyltransferase (GPI-GnT) complex that catalyzes the transfer of N-acetylglucosamine from UDP-N-acetylglucosamine to phosphatidylinositol and participates in the first step of GPI biosynthesis. This Homo sapiens (Human) protein is Phosphatidylinositol N-acetylglucosaminyltransferase subunit H.